The sequence spans 338 residues: Ketol-acid reductoisomerase (NADP(+)) (338 aa).

The KARI N-terminal Rossmann domain occupies 1-181; sequence MQVYYDKDAD…GGGRAGVIET (181 aa). Residues 24-27, R47, S50, S52, and 82-85 contribute to the NADP(+) site; these read YGSQ and DEHQ. Residue H107 is part of the active site. G133 provides a ligand contact to NADP(+). The KARI C-terminal knotted domain maps to 182-327; that stretch reads SFKDETETDL…AKLRDMMPWI (146 aa). Residues D190, E194, E226, and E230 each coordinate Mg(2+). S251 contacts substrate.

Belongs to the ketol-acid reductoisomerase family. Mg(2+) is required as a cofactor.

The catalysed reaction is (2R)-2,3-dihydroxy-3-methylbutanoate + NADP(+) = (2S)-2-acetolactate + NADPH + H(+). It carries out the reaction (2R,3R)-2,3-dihydroxy-3-methylpentanoate + NADP(+) = (S)-2-ethyl-2-hydroxy-3-oxobutanoate + NADPH + H(+). It participates in amino-acid biosynthesis; L-isoleucine biosynthesis; L-isoleucine from 2-oxobutanoate: step 2/4. It functions in the pathway amino-acid biosynthesis; L-valine biosynthesis; L-valine from pyruvate: step 2/4. Its function is as follows. Involved in the biosynthesis of branched-chain amino acids (BCAA). Catalyzes an alkyl-migration followed by a ketol-acid reduction of (S)-2-acetolactate (S2AL) to yield (R)-2,3-dihydroxy-isovalerate. In the isomerase reaction, S2AL is rearranged via a Mg-dependent methyl migration to produce 3-hydroxy-3-methyl-2-ketobutyrate (HMKB). In the reductase reaction, this 2-ketoacid undergoes a metal-dependent reduction by NADPH to yield (R)-2,3-dihydroxy-isovalerate. The polypeptide is Ketol-acid reductoisomerase (NADP(+)) (Thioalkalivibrio sulfidiphilus (strain HL-EbGR7)).